Reading from the N-terminus, the 300-residue chain is Sulfate adenylyltransferase subunit 2 (300 aa).

It belongs to the PAPS reductase family. CysD subfamily. As to quaternary structure, heterodimer composed of CysD, the smaller subunit, and CysN.

The catalysed reaction is sulfate + ATP + H(+) = adenosine 5'-phosphosulfate + diphosphate. It functions in the pathway sulfur metabolism; hydrogen sulfide biosynthesis; sulfite from sulfate: step 1/3. Functionally, with CysN forms the ATP sulfurylase (ATPS) that catalyzes the adenylation of sulfate producing adenosine 5'-phosphosulfate (APS) and diphosphate, the first enzymatic step in sulfur assimilation pathway. APS synthesis involves the formation of a high-energy phosphoric-sulfuric acid anhydride bond driven by GTP hydrolysis by CysN coupled to ATP hydrolysis by CysD. This chain is Sulfate adenylyltransferase subunit 2, found in Magnetococcus marinus (strain ATCC BAA-1437 / JCM 17883 / MC-1).